The sequence spans 277 residues: Large ribosomal subunit protein uL2 (277 aa).

The interval 219–277 is disordered; the sequence is TVRGSVMNPNDHPHGGGEGRSPIGHPSPRTPWGKPALGYKTRKNKKYSDRFIVKRRHDK.

This sequence belongs to the universal ribosomal protein uL2 family. In terms of assembly, part of the 50S ribosomal subunit. Forms a bridge to the 30S subunit in the 70S ribosome.

In terms of biological role, one of the primary rRNA binding proteins. Required for association of the 30S and 50S subunits to form the 70S ribosome, for tRNA binding and peptide bond formation. It has been suggested to have peptidyltransferase activity; this is somewhat controversial. Makes several contacts with the 16S rRNA in the 70S ribosome. The polypeptide is Large ribosomal subunit protein uL2 (Clostridium botulinum (strain 657 / Type Ba4)).